We begin with the raw amino-acid sequence, 215 residues long: Golgi-associated RAB2 interactor protein 5A (215 aa).

Disordered stretches follow at residues 1-20 and 174-215; these read MKRG…AGPG and QDYS…LWGL. The segment covering 178-191 has biased composition (acidic residues); sequence ALEDDEDDDEDEDR.

This sequence belongs to the GARIN family. As to quaternary structure, interacts (via N-terminus) with RAB2B (in GTP-bound form).

It localises to the golgi apparatus. Functionally, RAB2B effector protein which promotes cytosolic DNA-induced innate immune responses. Regulates IFN responses against DNA viruses by regulating the CGAS-STING signaling axis. This is Golgi-associated RAB2 interactor protein 5A (GARIN5A) from Bos taurus (Bovine).